The following is a 590-amino-acid chain: Glutamine--fructose-6-phosphate aminotransferase [isomerizing] (590 aa).

The active-site Nucleophile; for GATase activity is the cysteine 2. Residues 2 to 221 (CGIIGIVSSK…DGELGFITTS (220 aa)) enclose the Glutamine amidotransferase type-2 domain. SIS domains lie at 286–422 (IIAE…DNTN) and 445–580 (IGEE…PDKP). The For Fru-6P isomerization activity role is filled by lysine 585.

Homodimer.

The protein localises to the cytoplasm. The catalysed reaction is D-fructose 6-phosphate + L-glutamine = D-glucosamine 6-phosphate + L-glutamate. Its function is as follows. Catalyzes the first step in hexosamine metabolism, converting fructose-6P into glucosamine-6P using glutamine as a nitrogen source. This is Glutamine--fructose-6-phosphate aminotransferase [isomerizing] from Sulfolobus acidocaldarius (strain ATCC 33909 / DSM 639 / JCM 8929 / NBRC 15157 / NCIMB 11770).